Reading from the N-terminus, the 49-residue chain is Sperm protamine P1 (49 aa).

The segment at 1–49 (MARYRCCRSHSRSRCRRRRRRSRRRRRRSCGRRRRAGYRRYTVRYRRRR) is disordered.

The protein belongs to the protamine P1 family. As to expression, testis.

Its subcellular location is the nucleus. The protein resides in the chromosome. Protamines substitute for histones in the chromatin of sperm during the haploid phase of spermatogenesis. They compact sperm DNA into a highly condensed, stable and inactive complex. The polypeptide is Sperm protamine P1 (PRM1) (Macronycteris commersonii (Commerson's roundleaf bat)).